Reading from the N-terminus, the 274-residue chain is Thiamine kinase (274 aa).

This sequence belongs to the thiamine kinase family.

The catalysed reaction is thiamine + ATP = thiamine phosphate + ADP + H(+). Its pathway is cofactor biosynthesis; thiamine diphosphate biosynthesis; thiamine phosphate from thiamine: step 1/1. Catalyzes the ATP-dependent phosphorylation of thiamine to thiamine phosphate. Is involved in thiamine salvage. The chain is Thiamine kinase from Escherichia coli O157:H7.